We begin with the raw amino-acid sequence, 426 residues long: Enolase (426 aa).

Gln-163 serves as a coordination point for (2R)-2-phosphoglycerate. The Proton donor role is filled by Glu-205. The Mg(2+) site is built by Asp-242, Glu-283, and Asp-310. The (2R)-2-phosphoglycerate site is built by Lys-335, Arg-364, Ser-365, and Lys-386. Lys-335 acts as the Proton acceptor in catalysis.

The protein belongs to the enolase family. Requires Mg(2+) as cofactor.

The protein localises to the cytoplasm. The protein resides in the secreted. It is found in the cell surface. It catalyses the reaction (2R)-2-phosphoglycerate = phosphoenolpyruvate + H2O. Its pathway is carbohydrate degradation; glycolysis; pyruvate from D-glyceraldehyde 3-phosphate: step 4/5. Catalyzes the reversible conversion of 2-phosphoglycerate (2-PG) into phosphoenolpyruvate (PEP). It is essential for the degradation of carbohydrates via glycolysis. The polypeptide is Enolase (Cutibacterium acnes (strain DSM 16379 / KPA171202) (Propionibacterium acnes)).